Consider the following 350-residue polypeptide: Guanine nucleotide-binding protein G(t) subunit alpha-1 (350 aa).

Positions 1–21 (MGAGASAEEKHSRELEKKLKE) are disordered. A lipid anchor (N-myristoyl glycine) is attached at glycine 2. The span at 7–21 (AEEKHSRELEKKLKE) shows a compositional bias: basic and acidic residues. In terms of domain architecture, G-alpha spans 28–350 (RTVKLLLLGA…KENLKDCGLF (323 aa)). The interval 31–44 (KLLLLGAGESGKST) is G1 motif. 36–43 (GAGESGKS) contacts GTP. Mg(2+) is bound at residue serine 43. Phosphotyrosine is present on tyrosine 142. Residues aspartate 146, 171 to 177 (LRSRVKT), glycine 199, 265 to 268 (NKKD), and alanine 322 contribute to the GTP site. The segment at 169 to 177 (DVLRSRVKT) is G2 motif. Threonine 177 serves as a coordination point for Mg(2+). Residues 192-201 (FRMFDVGGQR) are G3 motif. Residues 261–268 (VLFLNKKD) are G4 motif. The segment at 320–325 (TCATDT) is G5 motif. An interaction with RHO region spans residues 340 to 350 (IKENLKDCGLF).

Belongs to the G-alpha family. G(i/o/t/z) subfamily. As to quaternary structure, heterotrimeric G proteins are composed of 3 subunits alpha, beta and gamma. The alpha chain contains the guanine nucleotide binding site. Interacts with RHO. Interacts with RGS9 and PDE6G. Interacts (when myristoylated) with UNC119; interaction is required for localization in sensory neurons. As to expression, in the retina, expressed in the rod photoreceptors.

It localises to the cell projection. The protein resides in the cilium. The protein localises to the photoreceptor outer segment. Its subcellular location is the membrane. It is found in the photoreceptor inner segment. Functions as a signal transducer for the rod photoreceptor RHO. Required for normal RHO-mediated light perception by the retina. Guanine nucleotide-binding proteins (G proteins) function as transducers downstream of G protein-coupled receptors (GPCRs), such as the photoreceptor RHO. The alpha chain contains the guanine nucleotide binding site and alternates between an active, GTP-bound state and an inactive, GDP-bound state. Activated RHO promotes GDP release and GTP binding. Signaling is mediated via downstream effector proteins, such as cGMP-phosphodiesterase. The sequence is that of Guanine nucleotide-binding protein G(t) subunit alpha-1 (Gnat1) from Mus musculus (Mouse).